The chain runs to 418 residues: UDP-N-acetyl-D-mannosamine dehydrogenase (418 aa).

Tyr10, Ile11, Asp30, Thr85, and Thr119 together coordinate NAD(+). Positions 152, 153, 204, 208, 211, 242, 244, 249, and 255 each coordinate UDP-N-acetyl-alpha-D-mannosaminouronate. Lys204 acts as the Proton donor/acceptor in catalysis. Cys258 (nucleophile) is an active-site residue. Lys261 serves as a coordination point for NAD(+). Residues Tyr318 and Lys319 each contribute to the UDP-N-acetyl-alpha-D-mannosaminouronate site. Residue Arg326 participates in NAD(+) binding. Arg398 provides a ligand contact to UDP-N-acetyl-alpha-D-mannosaminouronate.

The protein belongs to the UDP-glucose/GDP-mannose dehydrogenase family. In terms of assembly, homodimer.

The enzyme catalyses UDP-N-acetyl-alpha-D-mannosamine + 2 NAD(+) + H2O = UDP-N-acetyl-alpha-D-mannosaminouronate + 2 NADH + 3 H(+). In terms of biological role, catalyzes the four-electron oxidation of UDP-N-acetyl-D-mannosamine (UDP-ManNAc), reducing NAD(+) and releasing UDP-N-acetylmannosaminuronic acid (UDP-ManNAcA). In Pyrococcus horikoshii (strain ATCC 700860 / DSM 12428 / JCM 9974 / NBRC 100139 / OT-3), this protein is UDP-N-acetyl-D-mannosamine dehydrogenase.